We begin with the raw amino-acid sequence, 260 residues long: MIIVLSPAKSLDYETPPHVSHHTQPQFADDAAALIDELRRLSPQQIATLMSISDPLARLNFQRYADWSRASTPANAKQAVLAFNGDVYEGLDARSLSPDDLDYAQRHVRVLSGLYGLLRPLDLLQPYRLEMGTRFSNARGKDLYAFWGERITHALNAELKTRVGASRVLVNCASAEYFKSVKPKLLDARVVTPVFEDWKDGRYKIISFHAKRARGLMARYVVEGRIDSPDALKDFASEGYAFDASASNDDTYVFRRRAGA.

It belongs to the UPF0246 family.

This Burkholderia pseudomallei (strain K96243) protein is UPF0246 protein BPSL1241.